Here is a 358-residue protein sequence, read N- to C-terminus: Methylthioribose-1-phosphate isomerase (358 aa).

Substrate is bound by residues 54 to 56 (RGA), Arg96, and Gln205. Asp246 serves as the catalytic Proton donor. 256 to 257 (NK) lines the substrate pocket.

The protein belongs to the eIF-2B alpha/beta/delta subunits family. MtnA subfamily.

The catalysed reaction is 5-(methylsulfanyl)-alpha-D-ribose 1-phosphate = 5-(methylsulfanyl)-D-ribulose 1-phosphate. Its pathway is amino-acid biosynthesis; L-methionine biosynthesis via salvage pathway; L-methionine from S-methyl-5-thio-alpha-D-ribose 1-phosphate: step 1/6. Catalyzes the interconversion of methylthioribose-1-phosphate (MTR-1-P) into methylthioribulose-1-phosphate (MTRu-1-P). The chain is Methylthioribose-1-phosphate isomerase from Pseudomonas savastanoi pv. phaseolicola (strain 1448A / Race 6) (Pseudomonas syringae pv. phaseolicola (strain 1448A / Race 6)).